We begin with the raw amino-acid sequence, 272 residues long: Formamidopyrimidine-DNA glycosylase (272 aa).

Residue Pro-2 is the Schiff-base intermediate with DNA of the active site. The active-site Proton donor is Glu-3. Lys-58 acts as the Proton donor; for beta-elimination activity in catalysis. DNA-binding residues include His-94, Arg-112, and Arg-153. The FPG-type zinc finger occupies 238 to 272 (FVYDRAGEPCRVCGAPIRQIVQGQRSTYFCPNCQR). Arg-262 (proton donor; for delta-elimination activity) is an active-site residue.

Belongs to the FPG family. Monomer. Zn(2+) serves as cofactor.

It carries out the reaction Hydrolysis of DNA containing ring-opened 7-methylguanine residues, releasing 2,6-diamino-4-hydroxy-5-(N-methyl)formamidopyrimidine.. The enzyme catalyses 2'-deoxyribonucleotide-(2'-deoxyribose 5'-phosphate)-2'-deoxyribonucleotide-DNA = a 3'-end 2'-deoxyribonucleotide-(2,3-dehydro-2,3-deoxyribose 5'-phosphate)-DNA + a 5'-end 5'-phospho-2'-deoxyribonucleoside-DNA + H(+). Its function is as follows. Involved in base excision repair of DNA damaged by oxidation or by mutagenic agents. Acts as a DNA glycosylase that recognizes and removes damaged bases. Has a preference for oxidized purines, such as 7,8-dihydro-8-oxoguanine (8-oxoG). Has AP (apurinic/apyrimidinic) lyase activity and introduces nicks in the DNA strand. Cleaves the DNA backbone by beta-delta elimination to generate a single-strand break at the site of the removed base with both 3'- and 5'-phosphates. The protein is Formamidopyrimidine-DNA glycosylase of Burkholderia mallei (strain NCTC 10229).